Reading from the N-terminus, the 306-residue chain is Glutathione transport system permease protein GsiC (306 aa).

The Cytoplasmic portion of the chain corresponds to 1-8 (MLNYFIKR). A helical membrane pass occupies residues 9-29 (LLGLIPTLLIVMVLVFLFVHL). The Periplasmic portion of the chain corresponds to 30 to 98 (LPGDPARLAA…QEIALRFMPT (69 aa)). The ABC transmembrane type-1 domain occupies 95–292 (FMPTFWLTVC…LEFILINLLV (198 aa)). A helical transmembrane segment spans residues 99-119 (FWLTVCSMAWAVIFGMAIGIV). Residues 120–130 (SAVWRNGWPDR) lie on the Cytoplasmic side of the membrane. Residues 131-151 (IGMTLAVSGLSFPAFALGMLL) form a helical membrane-spanning segment. The Periplasmic portion of the chain corresponds to 152–168 (MQIFSVELGWLPTVGAD). Residues 169–189 (TWLHYILPSLTLGAAVAAVMA) form a helical membrane-spanning segment. At 190 to 228 (RFTRASFVDVLQEDYMRTARAKGVRESLVVLKHGLRNAL) the chain is on the cytoplasmic side. A helical transmembrane segment spans residues 229–249 (IPVVTMMGLQFGFLLGGSIVV). Residues 250 to 278 (EKVFNWPGLGRLLVDSVEMRDYPVIQAEV) are Periplasmic-facing. A helical transmembrane segment spans residues 279 to 299 (LLFSLEFILINLLVDMLYAAI). The Cytoplasmic portion of the chain corresponds to 300-306 (NPAIRYK).

It belongs to the binding-protein-dependent transport system permease family. As to quaternary structure, the complex is composed of two ATP-binding proteins (GsiA), two transmembrane proteins (GsiC and GsiD) and a solute-binding protein (GsiB).

It localises to the cell inner membrane. Its function is as follows. Part of the ABC transporter complex GsiABCD involved in glutathione import. Probably responsible for the translocation of the substrate across the membrane. The chain is Glutathione transport system permease protein GsiC from Pectobacterium atrosepticum (strain SCRI 1043 / ATCC BAA-672) (Erwinia carotovora subsp. atroseptica).